The primary structure comprises 358 residues: 3-dehydroquinate synthase (358 aa).

NAD(+) is bound by residues 104–108, 128–129, lysine 140, lysine 149, and 167–170; these read GVIGD, TT, and FLNT. Zn(2+) is bound by residues glutamate 182, histidine 246, and histidine 260.

This sequence belongs to the sugar phosphate cyclases superfamily. Dehydroquinate synthase family. Co(2+) is required as a cofactor. Requires Zn(2+) as cofactor. NAD(+) serves as cofactor.

It localises to the cytoplasm. The catalysed reaction is 7-phospho-2-dehydro-3-deoxy-D-arabino-heptonate = 3-dehydroquinate + phosphate. The protein operates within metabolic intermediate biosynthesis; chorismate biosynthesis; chorismate from D-erythrose 4-phosphate and phosphoenolpyruvate: step 2/7. Functionally, catalyzes the conversion of 3-deoxy-D-arabino-heptulosonate 7-phosphate (DAHP) to dehydroquinate (DHQ). This Staphylococcus carnosus (strain TM300) protein is 3-dehydroquinate synthase.